The sequence spans 90 residues: Small ribosomal subunit protein bS16 (90 aa).

Belongs to the bacterial ribosomal protein bS16 family.

In Lysinibacillus sphaericus (strain C3-41), this protein is Small ribosomal subunit protein bS16.